The following is a 186-amino-acid chain: Interferon beta-3 (186 aa).

An N-terminal signal peptide occupies residues 1-21 (MTYRCLLPMVLLLCFSTTALS). Cys-52 and Cys-161 are disulfide-bonded. N-linked (GlcNAc...) asparagine glycosylation is found at Asn-131 and Asn-173.

This sequence belongs to the alpha/beta interferon family. Monomer.

The protein resides in the secreted. Functionally, has antiviral, antibacterial and anticancer activities. This Bos taurus (Bovine) protein is Interferon beta-3 (IFNB3).